The following is a 216-amino-acid chain: Octanoyltransferase (216 aa).

The BPL/LPL catalytic domain occupies 31–205 (STTRDEVWLV…ELVTLLDYEQ (175 aa)). Residues 70–77 (RGGQVTYH), 137–139 (SLG), and 150–152 (GLA) each bind substrate. The active-site Acyl-thioester intermediate is Cys-168.

This sequence belongs to the LipB family.

It localises to the cytoplasm. The catalysed reaction is octanoyl-[ACP] + L-lysyl-[protein] = N(6)-octanoyl-L-lysyl-[protein] + holo-[ACP] + H(+). The protein operates within protein modification; protein lipoylation via endogenous pathway; protein N(6)-(lipoyl)lysine from octanoyl-[acyl-carrier-protein]: step 1/2. Catalyzes the transfer of endogenously produced octanoic acid from octanoyl-acyl-carrier-protein onto the lipoyl domains of lipoate-dependent enzymes. Lipoyl-ACP can also act as a substrate although octanoyl-ACP is likely to be the physiological substrate. This is Octanoyltransferase from Vibrio cholerae serotype O1 (strain ATCC 39541 / Classical Ogawa 395 / O395).